The sequence spans 117 residues: Putative membrane protein insertion efficiency factor (117 aa).

This sequence belongs to the UPF0161 family.

The protein resides in the cell inner membrane. Could be involved in insertion of integral membrane proteins into the membrane. In Bartonella bacilliformis (strain ATCC 35685 / KC583 / Herrer 020/F12,63), this protein is Putative membrane protein insertion efficiency factor.